Reading from the N-terminus, the 394-residue chain is Alanine--glyoxylate aminotransferase (394 aa).

Pyridoxal 5'-phosphate-binding positions include 76–78, S153, and Q204; that span reads AGH. S153 serves as a coordination point for substrate. K205 carries the N6-(pyridoxal phosphate)lysine modification. Positions 256 and 259 each coordinate pyridoxal 5'-phosphate. Position 356 (R356) interacts with substrate.

Belongs to the class-V pyridoxal-phosphate-dependent aminotransferase family. Homodimer. Requires pyridoxal 5'-phosphate as cofactor.

It is found in the peroxisome. The catalysed reaction is glyoxylate + L-alanine = glycine + pyruvate. It carries out the reaction (2S)-2-aminobutanoate + glyoxylate = 2-oxobutanoate + glycine. It catalyses the reaction glyoxylate + L-phenylalanine = 3-phenylpyruvate + glycine. The enzyme catalyses glyoxylate + L-serine = 3-hydroxypyruvate + glycine. The catalysed reaction is 2-oxobutanoate + L-alanine = (2S)-2-aminobutanoate + pyruvate. It carries out the reaction L-phenylalanine + pyruvate = 3-phenylpyruvate + L-alanine. It catalyses the reaction L-serine + pyruvate = 3-hydroxypyruvate + L-alanine. Catalyzes the pyridoxal 5'-phosphate-dependent transamination of alanine with glyoxylate as an amino group acceptor. Can also catalyze, although with much less efficiency, the transamination of amino-butyrate, phenylalanine and serine with glyoxylate or pyruvate as an amino group acceptor. Does not catalyze the transamination of both 3-hydroxykynurenine and L-kynurenine. May play a role in the detoxification of glyoxylate, a toxic plant metabolite from the fly diet. This is Alanine--glyoxylate aminotransferase from Drosophila melanogaster (Fruit fly).